We begin with the raw amino-acid sequence, 90 residues long: Small ribosomal subunit protein uS15 (90 aa).

The protein belongs to the universal ribosomal protein uS15 family. In terms of assembly, part of the 30S ribosomal subunit. Forms a bridge to the 50S subunit in the 70S ribosome, contacting the 23S rRNA.

Its function is as follows. One of the primary rRNA binding proteins, it binds directly to 16S rRNA where it helps nucleate assembly of the platform of the 30S subunit by binding and bridging several RNA helices of the 16S rRNA. In terms of biological role, forms an intersubunit bridge (bridge B4) with the 23S rRNA of the 50S subunit in the ribosome. In Wolbachia pipientis subsp. Culex pipiens (strain wPip), this protein is Small ribosomal subunit protein uS15.